The sequence spans 147 residues: Transcriptional regulator MraZ (147 aa).

SpoVT-AbrB domains lie at 5–51 and 80–123; these read GTPV…PQPV and ACDV…DSEK.

It belongs to the MraZ family. In terms of assembly, forms oligomers.

Its subcellular location is the cytoplasm. The protein localises to the nucleoid. This Nitrosospira multiformis (strain ATCC 25196 / NCIMB 11849 / C 71) protein is Transcriptional regulator MraZ.